We begin with the raw amino-acid sequence, 218 residues long: CTP-dependent diacylglycerol kinase 1 (218 aa).

Residues 1–19 (MSTKLTWSQWSKKHEIPRK) are Lumenal-facing. Residues 20–37 (ALHTSIGFFALLLQGCGY) traverse the membrane as a helical segment. H38 is a topological domain (cytoplasmic). A helical membrane pass occupies residues 39 to 59 (AAQIIPVIEIGFIPAFTGDVI). Residues 60–88 (RFNWPAFSRLYNRVIGPLMRESEKNAWNG) lie on the Lumenal side of the membrane. The chain crosses the membrane as a helical span at residues 89–109 (VIFYMIGVWIVLKVFPEEIAV). Residues 110 to 142 (MSVLLLSWCDTTASTVGRKWGKYTPKIAKNKSL) are Cytoplasmic-facing. The helical transmembrane segment at 143-163 (AGSLGAFVCGVFCCYVYWGLF) threads the bilayer. Residues 164–179 (RTGPDSLAAQSRIPFP) are Lumenal-facing. The next 2 helical transmembrane spans lie at 180–200 (WLCLINGFIGAFAEAMDVWGL) and 201–217 (DDNLVIPVVSACLLYLI). M218 is a topological domain (lumenal).

Belongs to the DGK1 family. Ca(2+) is required as a cofactor. It depends on Mg(2+) as a cofactor.

It is found in the endoplasmic reticulum membrane. It localises to the nucleus membrane. The catalysed reaction is a 1,2-diacyl-sn-glycerol + CTP = a 1,2-diacyl-sn-glycero-3-phosphate + CDP + H(+). CTP-dependent diacylglycerol kinase that catalyzes the phosphorylation of diacylglycerol (DAG) to phosphatidate (PA). Controls phosphatidate levels at the nuclear envelope. Counteracts the activity of PA phosphatase ned1. May be involved in vesicle trafficking between the endoplasmic reticulum and the Golgi apparatus. Involved in pre-tRNA splicing. This chain is CTP-dependent diacylglycerol kinase 1 (ptp4), found in Schizosaccharomyces pombe (strain 972 / ATCC 24843) (Fission yeast).